The sequence spans 598 residues: Transcriptional repressor tup12 (598 aa).

The tract at residues 118-177 (IASGVVPQSSKTKHGRNSVSFGKYGNAGPFNSDNSSKPLILNNGSSGGTPKNLRSPAIDS) is disordered. 7 WD repeats span residues 285–325 (EPPI…AMVF), 332–371 (LITLLQEESSKREGDLYVRSVAFSPDGKYLATGVEDQQIR), 374–413 (DIAQKRVYRLLTGHEQEIYSLDFSKDGKTLVSGSGDRTVC), 415–454 (WDVEAGEQKLILHTDDGVTTVMFSPDGQFIAAGSLDKVIR), 456–495 (WTSSGTLVEQLHGHEESVYSVAFSPDGKYLVSGSLDNTIK), 510–549 (YKEGGICKQTFTGHKDFILSVTVSPDGKWIISGSKDRTIQ), and 552–585 (SPDSPHSQLTLQGHNNSVISVAVSPNGHCFATGS).

Belongs to the WD repeat TUP1 family.

In terms of biological role, transcriptional repressor. The polypeptide is Transcriptional repressor tup12 (tup12) (Schizosaccharomyces pombe (strain 972 / ATCC 24843) (Fission yeast)).